A 307-amino-acid chain; its full sequence is Protoheme IX farnesyltransferase (307 aa).

8 helical membrane-spanning segments follow: residues 32–52 (MGIV…ALHF), 65–85 (FFTI…NNYI), 108–128 (PGFA…FLLL), 131–151 (PMAV…YSLW), 158–178 (LNTV…WAAI), 186–206 (IAWM…LALA), 251–271 (LGIT…VLGF), and 287–307 (FVYS…VTFF).

This sequence belongs to the UbiA prenyltransferase family. Protoheme IX farnesyltransferase subfamily. Interacts with CtaA.

Its subcellular location is the cell membrane. The catalysed reaction is heme b + (2E,6E)-farnesyl diphosphate + H2O = Fe(II)-heme o + diphosphate. It functions in the pathway porphyrin-containing compound metabolism; heme O biosynthesis; heme O from protoheme: step 1/1. Its function is as follows. Converts heme B (protoheme IX) to heme O by substitution of the vinyl group on carbon 2 of heme B porphyrin ring with a hydroxyethyl farnesyl side group. In Bacillus cereus (strain G9842), this protein is Protoheme IX farnesyltransferase.